The primary structure comprises 360 residues: Phospho-N-acetylmuramoyl-pentapeptide-transferase (360 aa).

The next 10 helical transmembrane spans lie at Ile27–Trp47, Pro72–Tyr92, Ser94–Ile114, Trp132–Gly152, Ile168–Ser188, Gly199–Thr219, Ala236–Phe256, Val263–Leu283, Phe288–Val308, and Val338–Lys358.

This sequence belongs to the glycosyltransferase 4 family. MraY subfamily. Requires Mg(2+) as cofactor.

The protein localises to the cell inner membrane. It catalyses the reaction UDP-N-acetyl-alpha-D-muramoyl-L-alanyl-gamma-D-glutamyl-meso-2,6-diaminopimeloyl-D-alanyl-D-alanine + di-trans,octa-cis-undecaprenyl phosphate = di-trans,octa-cis-undecaprenyl diphospho-N-acetyl-alpha-D-muramoyl-L-alanyl-D-glutamyl-meso-2,6-diaminopimeloyl-D-alanyl-D-alanine + UMP. It functions in the pathway cell wall biogenesis; peptidoglycan biosynthesis. In terms of biological role, catalyzes the initial step of the lipid cycle reactions in the biosynthesis of the cell wall peptidoglycan: transfers peptidoglycan precursor phospho-MurNAc-pentapeptide from UDP-MurNAc-pentapeptide onto the lipid carrier undecaprenyl phosphate, yielding undecaprenyl-pyrophosphoryl-MurNAc-pentapeptide, known as lipid I. This Yersinia pseudotuberculosis serotype O:1b (strain IP 31758) protein is Phospho-N-acetylmuramoyl-pentapeptide-transferase.